A 366-amino-acid chain; its full sequence is Chorismate synthase (366 aa).

Positions 48 and 54 each coordinate NADP(+). FMN contacts are provided by residues 132 to 134 (RSS), 244 to 245 (NA), Gly289, 304 to 308 (KPTSS), and Arg330.

This sequence belongs to the chorismate synthase family. In terms of assembly, homotetramer. Requires FMNH2 as cofactor.

The catalysed reaction is 5-O-(1-carboxyvinyl)-3-phosphoshikimate = chorismate + phosphate. It participates in metabolic intermediate biosynthesis; chorismate biosynthesis; chorismate from D-erythrose 4-phosphate and phosphoenolpyruvate: step 7/7. Its function is as follows. Catalyzes the anti-1,4-elimination of the C-3 phosphate and the C-6 proR hydrogen from 5-enolpyruvylshikimate-3-phosphate (EPSP) to yield chorismate, which is the branch point compound that serves as the starting substrate for the three terminal pathways of aromatic amino acid biosynthesis. This reaction introduces a second double bond into the aromatic ring system. The polypeptide is Chorismate synthase (Methylobacterium radiotolerans (strain ATCC 27329 / DSM 1819 / JCM 2831 / NBRC 15690 / NCIMB 10815 / 0-1)).